A 674-amino-acid chain; its full sequence is Metal-nicotianamine transporter YSL2 (674 aa).

The tract at residues Met-1–Arg-29 is disordered. Basic and acidic residues predominate over residues Glu-7–Gly-22. Transmembrane regions (helical) follow at residues Gly-41–Leu-61, Gly-64–Trp-84, Cys-118–Leu-138, Gly-162–Leu-182, Gly-224–Gly-244, Leu-283–Ile-303, Phe-329–Ile-349, Leu-392–Phe-412, Val-420–Leu-440, Ile-452–Val-472, Val-506–Phe-526, Ser-559–Ile-579, Phe-604–Trp-624, and Ala-633–Pro-653.

The protein belongs to the YSL (TC 2.A.67.2) family. In terms of tissue distribution, expressed in phloem cells of vascular bundles in leaves and leaf sheaths. Expressed at low levels in phloem companion cells in the central cylinder of roots, but not in the epidermal or cortical cells.

The protein resides in the cell membrane. In terms of biological role, involved in the phloem transport of iron and manganese and their translocation into the grain. Transports iron- and manganese-nicotianamine chelates, but not iron-phytosiderophore. This Oryza sativa subsp. japonica (Rice) protein is Metal-nicotianamine transporter YSL2 (YSL2).